We begin with the raw amino-acid sequence, 396 residues long: Interleukin-3 receptor subunit alpha (396 aa).

The N-terminal stretch at 1–16 (MAANLWLILGLLASHS) is a signal peptide. The Extracellular portion of the chain corresponds to 17-331 (SDLAAVREAP…VCPPEVMPVK (315 aa)). 5 cysteine pairs are disulfide-bonded: Cys-62–Cys-79, Cys-87–Cys-223, Cys-125–Cys-134, Cys-165–Cys-187, and Cys-245–Cys-323. Asn-91 is a glycosylation site (N-linked (GlcNAc...) asparagine). N-linked (GlcNAc...) asparagine glycosylation is found at Asn-213, Asn-246, Asn-272, and Asn-283. Residues 312–316 (LSSWS) carry the WSXWS motif motif. Residues 332–355 (TALVTSVATVLGAGLVAAGLLLWW) traverse the membrane as a helical segment. At 356–396 (RKSLLYRLCPPIPRLRLPLAGEMVVWEPALEDCEVTPVTDA) the chain is on the cytoplasmic side. Lys-357 is covalently cross-linked (Glycyl lysine isopeptide (Lys-Gly) (interchain with G-Cter in ubiquitin)). The Box 1 motif signature appears at 363 to 371 (LCPPIPRLR).

The protein belongs to the type I cytokine receptor family. Type 5 subfamily. As to quaternary structure, interacts with IL3. Heterodimer of an alpha and a beta subunit. The beta subunit is common to the IL3, IL5 and GM-CSF receptors. Ubiquitinated at Lys-357 by RNFT2 in response to IL3. Ubiquitination leads ligand-induced degradation by the proteasome. Ubiquitinated by RNF128 via 'Lys-27'-linked polyubiquitination, facilitating its degradation through the lysosomal pathway.

Its subcellular location is the cell membrane. It is found in the endomembrane system. Its function is as follows. Cell surface receptor for IL3 expressed on hematopoietic progenitor cells, monocytes and B-lymphocytes that controls the production and differentiation of hematopoietic progenitor cells into lineage-restricted cells. Ligand stimulation rapidly induces hetrodimerization with IL3RB, phosphorylation and enzyme activity of effector proteins such as JAK2 and PI3K that play a role in signaling cell proliferation and differentiation. Activation of JAK2 leads to STAT5-mediated transcriptional program. This chain is Interleukin-3 receptor subunit alpha (Il3ra), found in Mus musculus (Mouse).